Reading from the N-terminus, the 489-residue chain is Protein SIP5 (489 aa).

A disordered region spans residues 1–84; that stretch reads MGNVPGKIDQ…RKTSREKELA (84 aa). Ser-13 bears the Phosphoserine mark. Composition is skewed to polar residues over residues 21-32 and 51-69; these read SSYNTTSSNSVI and LVNNILNGNNARTKTGSHL. A phosphothreonine mark is found at Thr-183 and Thr-433. The tract at residues 419-489 is disordered; it reads SNRLIDPSHS…SKNRNTSLRP (71 aa). Ser-436 is subject to Phosphoserine. The residue at position 438 (Thr-438) is a Phosphothreonine. Residues 461–477 show a composition bias toward basic and acidic residues; it reads QMVREAIRLSLEDQDNR.

The protein belongs to the SIP5 family. As to quaternary structure, interacts with NPA1, SNF1 and REG1.

It localises to the cytoplasm. May negatively regulate the SNF1 kinase by promoting the interaction of the REG1/GLC7 phosphatase complex with the kinase. Deletion of SIP5 promotes resistance to artemisinin, which is probably an indirect effect of an action on the electron transport chain. The chain is Protein SIP5 (SIP5) from Saccharomyces cerevisiae (strain ATCC 204508 / S288c) (Baker's yeast).